The following is a 254-amino-acid chain: Acetylglutamate kinase (254 aa).

Substrate-binding positions include 40–41 (GG), Arg62, and Asn158.

This sequence belongs to the acetylglutamate kinase family. ArgB subfamily.

The protein localises to the cytoplasm. It catalyses the reaction N-acetyl-L-glutamate + ATP = N-acetyl-L-glutamyl 5-phosphate + ADP. The protein operates within amino-acid biosynthesis; L-arginine biosynthesis; N(2)-acetyl-L-ornithine from L-glutamate: step 2/4. Catalyzes the ATP-dependent phosphorylation of N-acetyl-L-glutamate. The chain is Acetylglutamate kinase from Chloroflexus aurantiacus (strain ATCC 29366 / DSM 635 / J-10-fl).